Consider the following 199-residue polypeptide: Large ribosomal subunit protein mL51 (199 aa).

Residues 1–15 constitute a mitochondrion transit peptide; the sequence is MNSASISRLTSVIRT.

It belongs to the mitochondrion-specific ribosomal protein mL51 family. In terms of assembly, component of the mitochondrial ribosome large subunit (39S) which comprises a 16S rRNA and about 50 distinct proteins.

The protein localises to the mitochondrion. The sequence is that of Large ribosomal subunit protein mL51 (mrpl-51) from Caenorhabditis briggsae.